Consider the following 126-residue polypeptide: Probable DNA-directed RNA polymerase II subunit RPB11 (126 aa).

Belongs to the archaeal Rpo11/eukaryotic RPB11/RPC19 RNA polymerase subunit family. In terms of assembly, component of the RNA polymerase II (Pol II) complex consisting of 12 subunits.

It localises to the nucleus. In terms of biological role, DNA-dependent RNA polymerase catalyzes the transcription of DNA into RNA using the four ribonucleoside triphosphates as substrates. Component of RNA polymerase II which synthesizes mRNA precursors and many functional non-coding RNAs. Pol II is the central component of the basal RNA polymerase II transcription machinery. It is composed of mobile elements that move relative to each other. RPB11 is part of the core element with the central large cleft. This chain is Probable DNA-directed RNA polymerase II subunit RPB11, found in Plasmodium falciparum (isolate 3D7).